The sequence spans 419 residues: MEKPLPNPPIQESLRKQSPQDAVYDDLVFGLKRYEAAFSIKDSIEDVLANFSKDEEKEMVCLSTSIAENPYQSLSLESVPSKILFGSFLFYVKDRIPEKAGYIIEEQFCKRLQQIDYDAYSFSPKECNEKLKNIFSEFSQMKLKMLSVFFSIVQILLPKLSGDYQEHVQFFASISAVVAPRGYVFEIYHAVEHLSLEAREVFQLHHPPSPKQTRRVVSEGPLNGVNYKQNTTNNRVSSFQNSQYSTLNNFQNNSNQSPNSNDLQPLQAEAFHSAHNGYSSSTLNLNSELNVMKDHDLQAPIPRALKQHKLPPIPVPEVQTTNIGYQTDLPLQNPNDNLVSLAIYEALYEKFLKACKDLEEVSKSYEESREEIEALHETFTEEVTSFQSTKRLKEEKIIQEKSRVDKMIDEYRQKLSEST.

This is an uncharacterized protein from Schizosaccharomyces pombe (strain 972 / ATCC 24843) (Fission yeast).